A 1423-amino-acid chain; its full sequence is Fructan beta-fructosidase (1423 aa).

Positions 1-39 are cleaved as a signal peptide; that stretch reads MEEETVCKNWFMRKSGKSWIFGCAVFFVLGLATALPVAA. A disordered region spans residues 44-161; sequence QTTAADTAVT…TNLEDMSHDT (118 aa). The segment covering 69–126 has biased composition (polar residues); sequence AVTETTQSEGTASKQLTTPAVADQTTEPTDNEPISSSDGASSPYQVTDTTEPQQTLTP. Substrate is bound by residues 455–458, Gln-474, 513–514, 581–582, and Asp-783; these read WAND, FS, and RD. The active site involves Asp-458. The involved in binding of sugars with beta-(2,6) linkages or binding of molecular weight fructans stretch occupies residues 867-871; it reads ASVEV. A BIG2 domain is found at 924 to 1002; sequence PVAMNTTTAK…SKENPSLSKT (79 aa). Over residues 1368 to 1385 the composition is skewed to polar residues; sequence DVNSVQQTEPSVMSSSPK. Residues 1368-1394 form a disordered region; that stretch reads DVNSVQQTEPSVMSSSPKATLPDTGDH. The short motif at 1388–1392 is the LPXTG sorting signal element; it reads LPDTG. At Thr-1391 the chain carries Pentaglycyl murein peptidoglycan amidated threonine. A propeptide spans 1392 to 1423 (removed by sortase); the sequence is GDHKTDLSQLGVLAMIGSFLVEIAGYFKKRKD.

This sequence belongs to the glycosyl hydrolase 32 family.

The protein localises to the secreted. The protein resides in the cell wall. The enzyme catalyses Hydrolysis of terminal, non-reducing (2-&gt;1)- and (2-&gt;6)-linked beta-D-fructofuranose residues in fructans.. Functionally, this protein is a fructanase enzyme which degrades levans and inulins to fructose and also cleaves sucrose into glucose and fructose and can therefore function as an extracellular invertase. This Streptococcus mutans serotype c (strain ATCC 700610 / UA159) protein is Fructan beta-fructosidase (fruA).